Consider the following 416-residue polypeptide: UPF0761 membrane protein Mpe_A1422 (416 aa).

A run of 6 helical transmembrane segments spans residues isoleucine 63–glycine 83, leucine 120–aspartate 140, valine 159–leucine 179, leucine 198–phenylalanine 218, glycine 234–valine 256, and isoleucine 271–alanine 291.

It belongs to the UPF0761 family.

The protein resides in the cell inner membrane. In Methylibium petroleiphilum (strain ATCC BAA-1232 / LMG 22953 / PM1), this protein is UPF0761 membrane protein Mpe_A1422.